We begin with the raw amino-acid sequence, 216 residues long: Small ribosomal subunit protein uS5 (216 aa).

Positions 1–55 are disordered; it reads MDKKLENQKDLLNQDPKVELNSQSVAKNPLNSREVKPIQRRRPLRKNARDKNSKP. Polar residues predominate over residues 20 to 31; the sequence is LNSQSVAKNPLN. Residues 57–120 form the S5 DRBM domain; that stretch reads FEERVIAIHR…KDAQNRLVSV (64 aa).

Belongs to the universal ribosomal protein uS5 family. As to quaternary structure, part of the 30S ribosomal subunit. Contacts proteins S4 and S8.

With S4 and S12 plays an important role in translational accuracy. Its function is as follows. Located at the back of the 30S subunit body where it stabilizes the conformation of the head with respect to the body. The chain is Small ribosomal subunit protein uS5 from Mesomycoplasma hyopneumoniae (strain 7448) (Mycoplasma hyopneumoniae).